The primary structure comprises 246 residues: MTILDSPGAPDTGIDALALGTAVARVRETSSDQPLFTDRYSQMLVDAAGPMEPDQAALAVPGYVAARTKWFDDFFLAASAAGLAQIVLLSPGLDTRAWRLPWLNDTVIFEVDRPRTLAFKQQTLTRAGVTPTATYVPVPVDLGDDWPRALTAAGFSHGEPTAWAAEGLYADLPEAEQDNLLERIDLYSARGSRIAMDVDADGPDVVCWLCARHWEMGSTDAPDVMARYHRDAAGAPSGVFVEGRKL.

S-adenosyl-L-methionine contacts are provided by residues Asp-112 and 141–142 (DL).

Belongs to the UPF0677 family.

In terms of biological role, exhibits S-adenosyl-L-methionine-dependent methyltransferase activity. This Mycolicibacterium gilvum (strain PYR-GCK) (Mycobacterium gilvum (strain PYR-GCK)) protein is Putative S-adenosyl-L-methionine-dependent methyltransferase Mflv_0168.